We begin with the raw amino-acid sequence, 3123 residues long: Protein bark beetle (3123 aa).

Positions Met-1–Ala-34 are cleaved as a signal peptide. The Extracellular segment spans residues Phe-35–Asp-2714. The interval Asp-83 to Leu-104 is disordered. Over residues Ser-91–Thr-102 the composition is skewed to low complexity. Positions Ile-191–Leu-295 constitute an SRCR 1 domain. Disulfide bonds link Cys-216-Cys-284, Cys-231-Cys-294, and Cys-262-Cys-272. An N-linked (GlcNAc...) asparagine glycan is attached at Asn-221. 3 PbH1 repeats span residues Gly-358–Arg-380, Trp-382–Ser-404, and Gln-406–Gly-428. Asn-377, Asn-389, and Asn-403 each carry an N-linked (GlcNAc...) asparagine glycan. An intrachain disulfide couples Cys-446 to Cys-474. The CUB domain maps to Cys-446–Asp-559. N-linked (GlcNAc...) asparagine glycosylation is found at Asn-498 and Asn-523. PbH1 repeat units lie at residues Ala-562–Asn-584, Arg-586–Ser-609, and Ala-611–Tyr-633. 8 N-linked (GlcNAc...) asparagine glycosylation sites follow: Asn-615, Asn-620, Asn-630, Asn-639, Asn-658, Asn-672, Asn-702, and Asn-709. PbH1 repeat units lie at residues Asn-756–Asn-778 and Pro-789–Ser-809. N-linked (GlcNAc...) asparagine glycans are attached at residues Asn-834, Asn-900, and Asn-1040. The SRCR 2 domain occupies Val-1071 to Tyr-1175. 3 cysteine pairs are disulfide-bonded: Cys-1096/Cys-1164, Cys-1109/Cys-1174, and Cys-1144/Cys-1154. 2 PbH1 repeats span residues His-1219–Tyr-1241 and Lys-1248–Gln-1270. N-linked (GlcNAc...) asparagine glycosylation occurs at Asn-1375. PbH1 repeat units follow at residues Val-1451–Arg-1475 and Asn-1489–Ser-1511. N-linked (GlcNAc...) asparagine glycans are attached at residues Asn-1489, Asn-1520, and Asn-1529. A PbH1 13 repeat occupies Leu-1553–Leu-1575. Residues Asn-1584, Asn-1593, and Asn-1614 are each glycosylated (N-linked (GlcNAc...) asparagine). The PbH1 14 repeat unit spans residues Leu-1722 to Arg-1744. N-linked (GlcNAc...) asparagine glycans are attached at residues Asn-1883, Asn-1920, and Asn-1940. Residues Ile-1912 to Asn-2037 form the SRCR 3 domain. 3 disulfide bridges follow: Cys-1950-Cys-2025, Cys-1963-Cys-2036, and Cys-2000-Cys-2010. 2 PbH1 repeats span residues His-2104–Ala-2126 and Ser-2128–Ser-2150. Residues Asn-2139, Asn-2231, Asn-2251, Asn-2314, and Asn-2357 are each glycosylated (N-linked (GlcNAc...) asparagine). 3 PbH1 repeats span residues Thr-2337–Cys-2361, Met-2372–Ala-2393, and Ser-2401–Gly-2424. N-linked (GlcNAc...) asparagine glycosylation is found at Asn-2459, Asn-2536, Asn-2546, Asn-2566, Asn-2596, and Asn-2636. The chain crosses the membrane as a helical span at residues Ile-2715–Ala-2735. Over Phe-2736–Met-3123 the chain is Cytoplasmic. 4 disordered regions span residues Ile-2766–Gly-2789, Tyr-2961–Gln-2983, Leu-2996–Arg-3015, and Arg-3025–Met-3123. Over residues Tyr-2778 to Lys-2788 the composition is skewed to polar residues. A compositionally biased stretch (low complexity) spans Ser-2964–Arg-2973. 2 stretches are compositionally biased toward low complexity: residues Pro-3047 to Gln-3057 and Ser-3068 to Pro-3078. Residues Pro-3107–Met-3123 are compositionally biased toward polar residues.

N-glycosylated. Post-translationally, may be proteolytically cleaved in the extracellular domain. As to expression, expression detected in embryonic epithelia and central nervous system (at protein level). First detected during stage 13 in the tracheal system, the foregut, the hindgut, the salivary glands and the epidermis. Expression persists in these tissues until the end of embryogenesis. Expression in epithelia declines from late stage 15 and expression appears in the central nervous system during stage 16.

The protein localises to the cell membrane. Its subcellular location is the cell junction. It is found in the septate junction. The protein resides in the adherens junction. Required for the maturation but not the establishment of septate junctions in developing epithelial cells and is involved in epithelial cell adhesion during septate junction maturation. Plays a role in the proper localization of the septate junction core components pck/mega, kune, Nrx-IV and Nrg during late embryogenesis. Involved in the formation of tricellular junctions which mediate cell contact where three epithelial cells meet but not of bicellular junctions. Required for the accumulation of Gli at tricellular junctions. This Drosophila melanogaster (Fruit fly) protein is Protein bark beetle.